Consider the following 140-residue polypeptide: MMDIKQIQEALPHRYPMLLVDRILEASDDEIVAIKNVTINEPFFNGHFPQYPVMPGVLIMEALAQTAGVLELSKEENKGKLVFYAGMDKVKFKKQVVPGDQLVMTARFIKRRGTIAVVEAKAEVDGKLAASGTLTFAFGQ.

His47 is an active-site residue.

It belongs to the thioester dehydratase family. FabZ subfamily.

The protein localises to the cytoplasm. The catalysed reaction is a (3R)-hydroxyacyl-[ACP] = a (2E)-enoyl-[ACP] + H2O. Functionally, involved in unsaturated fatty acids biosynthesis. Catalyzes the dehydration of short chain beta-hydroxyacyl-ACPs and long chain saturated and unsaturated beta-hydroxyacyl-ACPs. In Streptococcus equi subsp. equi (strain 4047), this protein is 3-hydroxyacyl-[acyl-carrier-protein] dehydratase FabZ.